Here is a 100-residue protein sequence, read N- to C-terminus: Small ribosomal subunit protein uS14c (100 aa).

Belongs to the universal ribosomal protein uS14 family. In terms of assembly, component of the chloroplast small ribosomal subunit (SSU). Mature 70S chloroplast ribosomes of higher plants consist of a small (30S) and a large (50S) subunit. The 30S small subunit contains 1 molecule of ribosomal RNA (16S rRNA) and 24 different proteins. The 50S large subunit contains 3 rRNA molecules (23S, 5S and 4.5S rRNA) and 33 different proteins.

The protein localises to the plastid. It is found in the chloroplast. In terms of biological role, component of the chloroplast ribosome (chloro-ribosome), a dedicated translation machinery responsible for the synthesis of chloroplast genome-encoded proteins, including proteins of the transcription and translation machinery and components of the photosynthetic apparatus. The protein is Small ribosomal subunit protein uS14c of Spinacia oleracea (Spinach).